A 344-amino-acid chain; its full sequence is Small neutral protease regulatory protein (344 aa).

One can recognise an HTH lysR-type domain in the interval 1–60; the sequence is MELEVRHLRALCAIADAGSLHRAARRLGVAQPTLSTQLTRIEQALGGPLFTRERTGCRPT. Positions 20–39 form a DNA-binding region, H-T-H motif; the sequence is LHRAARRLGVAQPTLSTQLT. A disordered region spans residues 322-344; it reads SCGRAEGSRSRRPRDVAPPRPIG. Residues 327–338 show a composition bias toward basic and acidic residues; the sequence is EGSRSRRPRDVA.

It belongs to the LysR transcriptional regulatory family.

Functionally, transcriptional activator of the gene (snpA) for the small neutral protease. The sequence is that of Small neutral protease regulatory protein (mprR) from Streptomyces lividans.